Reading from the N-terminus, the 234-residue chain is Thrombin-like enzyme contortrixobin (234 aa).

In terms of domain architecture, Peptidase S1 spans 1 to 225; it reads VVGGDECNIN…YNDWIQSIIA (225 aa). Disulfide bonds link cysteine 7/cysteine 139, cysteine 26/cysteine 42, cysteine 74/cysteine 232, cysteine 118/cysteine 186, cysteine 150/cysteine 165, and cysteine 176/cysteine 201. Catalysis depends on charge relay system residues histidine 41 and aspartate 86. The active-site Charge relay system is serine 180.

Monomer. Not glycosylated. Expressed by the venom gland.

It localises to the secreted. With respect to regulation, strongly inhibited by diisopropylfluorophosphate (DFP) and to a lesser extent by PMSF, benzamidine and 4,6-diamidino-2-phenylindole. Low inhibition by hirudin. Its function is as follows. Thrombin-like snake venom serine protease that cleaves beta chain of fibrinogen (FGB), releasing fibrinopeptide B. Has a coagulant activity activating blood coagulation factors V (F5) and XIII (F13A1). This is Thrombin-like enzyme contortrixobin from Agkistrodon contortrix contortrix (Southern copperhead).